Here is a 199-residue protein sequence, read N- to C-terminus: Small ribosomal subunit protein uS4B (199 aa).

One can recognise an S4 RNA-binding domain in the interval 88 to 151; it reads CRLDNLVYRT…RKNKIFIDNF (64 aa).

The protein belongs to the universal ribosomal protein uS4 family. In terms of assembly, part of the 30S ribosomal subunit. Contacts protein S5. The interaction surface between S4 and S5 is involved in control of translational fidelity.

One of the primary rRNA binding proteins, it binds directly to 16S rRNA where it nucleates assembly of the body of the 30S subunit. In terms of biological role, with S5 and S12 plays an important role in translational accuracy. In Alkaliphilus metalliredigens (strain QYMF), this protein is Small ribosomal subunit protein uS4B.